The following is a 420-amino-acid chain: G2/mitotic-specific cyclin-A (420 aa).

The segment at Val-64–Asp-93 is disordered. Residues Gln-83 to Asp-93 are compositionally biased toward polar residues.

The protein belongs to the cyclin family. Cyclin AB subfamily.

Its function is as follows. Essential for the control of the cell cycle at the G2/M (mitosis) transition. Interacts with the CDC2 and CDK2 protein kinases to form MPF. G2/M cyclins accumulate steadily during G2 and are abruptly destroyed at mitosis. The polypeptide is G2/mitotic-specific cyclin-A (Hydra viridissima (Green hydra)).